The chain runs to 214 residues: Proteasome subunit beta type-6 (214 aa).

Positions 1–14 (MEAPEWLDNAVDLG) are cleaved as a propeptide — removed in mature form. Residue threonine 15 is the Nucleophile of the active site.

Belongs to the peptidase T1B family. As to quaternary structure, the 26S proteasome consists of a 20S proteasome core and two 19S regulatory subunits. The 20S proteasome core is composed of 28 subunits that are arranged in four stacked rings, resulting in a barrel-shaped structure. The two end rings are each formed by seven alpha subunits, and the two central rings are each formed by seven beta subunits. The catalytic chamber with the active sites is on the inside of the barrel.

Its subcellular location is the cytoplasm. The protein resides in the nucleus. The catalysed reaction is Cleavage of peptide bonds with very broad specificity.. In terms of biological role, the proteasome is a multicatalytic proteinase complex which is characterized by its ability to cleave peptides with Arg, Phe, Tyr, Leu, and Glu adjacent to the leaving group at neutral or slightly basic pH. The proteasome has an ATP-dependent proteolytic activity. This chain is Proteasome subunit beta type-6 (psmB6), found in Dictyostelium discoideum (Social amoeba).